A 646-amino-acid polypeptide reads, in one-letter code: FAD-binding monooxygenase prhK (646 aa).

N-linked (GlcNAc...) asparagine glycosylation is present at Asn46. The chain crosses the membrane as a helical span at residues Ile80–Ile97. FAD-binding positions include Thr119 to Trp122, Asp131 to Thr132, and Tyr137. Residue Met129–Asp131 participates in NADP(+) binding. Residues Thr275–Gln281 and Arg298–Thr299 contribute to the NADP(+) site. N-linked (GlcNAc...) asparagine glycosylation is found at Asn429, Asn483, and Asn529.

It belongs to the FAD-binding monooxygenase family. The cofactor is FAD.

The protein resides in the membrane. The catalysed reaction is preaustinoid A + AH2 + O2 = preaustinoid A1 + A + H2O. It functions in the pathway secondary metabolite biosynthesis; terpenoid biosynthesis. FAD-binding monooxygenase; part of the gene cluster that mediates the biosynthesis of paraherquonin, a meroterpenoid with a unique, highly congested hexacyclic molecular architecture. The first step of the pathway is the synthesis of 3,5-dimethylorsellinic acid (DMOA) by the polyketide synthase prhL. Synthesis of DMOA is followed by farnesylation by the prenyltransferase prhE, methylesterification by the methyl-transferase prhM, epoxidation of the prenyl chain by the flavin-dependent monooxygenase prhF, and cyclization of the farnesyl moiety by the terpene cyclase prhH, to yield the tetracyclic intermediate, protoaustinoid A. The short chain dehydrogenase prhI then oxidizes the C-3 alcohol group of the terpene cyclase product to transform protoaustinoid A into protoaustinoid B. The FAD-binding monooxygenase prhJ catalyzes the oxidation of protoaustinoid B into preaustinoid A which is further oxidized into preaustinoid A1 by FAD-binding monooxygenase phrK. Finally, prhA leads to berkeleydione via the berkeleyone B intermediate. PrhA is a multifunctional dioxygenase that first desaturates at C5-C6 to form berkeleyone B, followed by rearrangement of the A/B-ring to form the cycloheptadiene moiety in berkeleydione. Berkeleydione serves as the key intermediate for the biosynthesis of paraherquonin as well as many other meroterpenoids. The cytochrome P450 monooxygenases prhB, prhD, and prhN, as well as the isomerase prhC, are probably involved in the late stage of paraherquonin biosynthesis, after the production of berkeleydione. Especially prhC might be a multifunctional enzyme that catalyzes the D-ring expansion via intramolecular methoxy rearrangement, as well as the hydrolysis of the expanded D-ring. In Penicillium brasilianum, this protein is FAD-binding monooxygenase prhK.